We begin with the raw amino-acid sequence, 116 residues long: uncharacterized protein (116 aa).

The segment at 1-72 (MCKHVLNAQV…SDEYCPNCDN (72 aa)) adopts a CHY-type zinc-finger fold. Zn(2+) is bound by residues Cys-2, His-4, Cys-16, Cys-17, Cys-23, Cys-26, His-27, His-33, Cys-45, Cys-48, Cys-67, and Cys-70.

The protein localises to the cytoplasm. This is an uncharacterized protein from Schizosaccharomyces pombe (strain 972 / ATCC 24843) (Fission yeast).